The sequence spans 328 residues: N-acyl-aromatic-L-amino acid amidohydrolase (carboxylate-forming) A (328 aa).

Residues His-30 and Glu-33 each contribute to the Zn(2+) site. Residues Arg-74 and 81–82 each bind substrate; that span reads NR. His-127 is a binding site for Zn(2+). 2 residues coordinate substrate: Glu-189 and Tyr-300.

Belongs to the AspA/AstE family. Aspartoacylase subfamily. Homotetramer. It depends on Zn(2+) as a cofactor.

It is found in the apical cell membrane. It localises to the cytoplasm. It carries out the reaction an N-acyl-aromatic L-alpha-amino acid + H2O = an aromatic L-alpha-amino acid + a carboxylate. It catalyses the reaction an N-acetyl-L-cysteine-S-conjugate + H2O = an S-substituted L-cysteine + acetate. In terms of biological role, plays an important role in deacetylating mercapturic acids in kidney proximal tubules. The polypeptide is N-acyl-aromatic-L-amino acid amidohydrolase (carboxylate-forming) A (acy3.1) (Danio rerio (Zebrafish)).